The primary structure comprises 406 residues: Argininosuccinate synthase (406 aa).

Residue 9–17 (AYSGGLDTS) coordinates ATP. Position 86 (Y86) interacts with L-citrulline. ATP is bound at residue G116. Residues T118, N122, and D123 each contribute to the L-aspartate site. N122 serves as a coordination point for L-citrulline. L-citrulline is bound by residues R126, S174, S183, E259, and Y271.

It belongs to the argininosuccinate synthase family. Type 1 subfamily. In terms of assembly, homotetramer.

Its subcellular location is the cytoplasm. The catalysed reaction is L-citrulline + L-aspartate + ATP = 2-(N(omega)-L-arginino)succinate + AMP + diphosphate + H(+). Its pathway is amino-acid biosynthesis; L-arginine biosynthesis; L-arginine from L-ornithine and carbamoyl phosphate: step 2/3. The chain is Argininosuccinate synthase from Geobacillus kaustophilus (strain HTA426).